The following is a 301-amino-acid chain: Homoserine O-acetyltransferase (301 aa).

The Acyl-thioester intermediate role is filled by Cys142. Positions 163 and 192 each coordinate substrate. His235 functions as the Proton acceptor in the catalytic mechanism. Glu237 is a catalytic residue. Arg249 provides a ligand contact to substrate.

The protein belongs to the MetA family.

The protein resides in the cytoplasm. The enzyme catalyses L-homoserine + acetyl-CoA = O-acetyl-L-homoserine + CoA. It participates in amino-acid biosynthesis; L-methionine biosynthesis via de novo pathway; O-acetyl-L-homoserine from L-homoserine: step 1/1. In terms of biological role, transfers an acetyl group from acetyl-CoA to L-homoserine, forming acetyl-L-homoserine. The protein is Homoserine O-acetyltransferase of Succinatimonas hippei (strain DSM 22608 / JCM 16073 / KCTC 15190 / YIT 12066).